The following is a 527-amino-acid chain: ARS-binding protein 2 (527 aa).

3 disordered regions span residues 160 to 184 (PDVNSSSISTMRTSTSPSNWIHSAS), 219 to 265 (SHHM…NSHN), and 282 to 344 (IDPD…IKRL). The span at 164–177 (SSSISTMRTSTSPS) shows a compositional bias: low complexity. Positions 225–239 (RGSQQAHQTTPQNHS) are enriched in polar residues. Positions 284–303 (PDWHQWPDDLRDVSSPKESD) are enriched in basic and acidic residues. S297, S298, and S302 each carry phosphoserine. Residues 328–343 (PRKRGRPPGARNKIKR) are compositionally biased toward basic residues.

It localises to the nucleus. Functionally, binds, preferentially, to the Maundrell ARS consensus sequence within ARS3002. The polypeptide is ARS-binding protein 2 (abp2) (Schizosaccharomyces pombe (strain 972 / ATCC 24843) (Fission yeast)).